A 464-amino-acid polypeptide reads, in one-letter code: Siroheme synthase (464 aa).

The tract at residues 1 to 203 is precorrin-2 dehydrogenase /sirohydrochlorin ferrochelatase; the sequence is MKYLPLFHNL…GQGAEAERLL (203 aa). NAD(+) contacts are provided by residues 22 to 23 and 43 to 44; these read EI and PE. S128 bears the Phosphoserine mark. The segment at 216-464 is uroporphyrinogen-III C-methyltransferase; it reads GEVYLVGAGP…AWFEGAQGQI (249 aa). P225 provides a ligand contact to S-adenosyl-L-methionine. D248 functions as the Proton acceptor in the catalytic mechanism. K270 acts as the Proton donor in catalysis. S-adenosyl-L-methionine is bound by residues 301 to 303, I306, 331 to 332, M383, and G412; these read GGD and TA.

In the N-terminal section; belongs to the precorrin-2 dehydrogenase / sirohydrochlorin ferrochelatase family. The protein in the C-terminal section; belongs to the precorrin methyltransferase family.

The enzyme catalyses uroporphyrinogen III + 2 S-adenosyl-L-methionine = precorrin-2 + 2 S-adenosyl-L-homocysteine + H(+). It catalyses the reaction precorrin-2 + NAD(+) = sirohydrochlorin + NADH + 2 H(+). It carries out the reaction siroheme + 2 H(+) = sirohydrochlorin + Fe(2+). It functions in the pathway cofactor biosynthesis; adenosylcobalamin biosynthesis; precorrin-2 from uroporphyrinogen III: step 1/1. The protein operates within cofactor biosynthesis; adenosylcobalamin biosynthesis; sirohydrochlorin from precorrin-2: step 1/1. Its pathway is porphyrin-containing compound metabolism; siroheme biosynthesis; precorrin-2 from uroporphyrinogen III: step 1/1. It participates in porphyrin-containing compound metabolism; siroheme biosynthesis; siroheme from sirohydrochlorin: step 1/1. It functions in the pathway porphyrin-containing compound metabolism; siroheme biosynthesis; sirohydrochlorin from precorrin-2: step 1/1. Functionally, multifunctional enzyme that catalyzes the SAM-dependent methylations of uroporphyrinogen III at position C-2 and C-7 to form precorrin-2 via precorrin-1. Then it catalyzes the NAD-dependent ring dehydrogenation of precorrin-2 to yield sirohydrochlorin. Finally, it catalyzes the ferrochelation of sirohydrochlorin to yield siroheme. The chain is Siroheme synthase from Pseudomonas fluorescens (strain Pf0-1).